The chain runs to 324 residues: Uric acid degradation bifunctional protein TTL (324 aa).

N-acetylalanine is present on Ala2. A required for BRI1-binding region spans residues 2–29 (AMEIGEDEWKVCCGSSEFAKQMSTSGPL). An OHCU decarboxylase region spans residues 2 to 161 (AMEIGEDEWK…LRMAKLFSDK (160 aa)). Residue His58 is the Proton donor; for OHCU decarboxylase activity of the active site. (S)-allantoin-binding residues include His58, Pro59, Glu80, Phe111, Ile113, and Ala115. Positions 178–324 (KPQDRLRIIG…PFSFSTYRGS (147 aa)) are HIU hydrolase. The short motif at 182–190 (RLRIIGGHL) is the Internal peroxisomal targeting signal (PTS2) element.

It in the N-terminal section; belongs to the OHCU decarboxylase family. The protein in the C-terminal section; belongs to the transthyretin family. 5-hydroxyisourate hydrolase subfamily. In terms of assembly, homodimer. Forms tetramers. Interacts with BRI1 in a kinase-dependent manner. Interacts with B1L. Post-translationally, phosphorylated by BRI1 in vitro. As to expression, expressed ubiquitously with highest levels in flowers buds and elongating inflorescences. In terms of tissue distribution, mainly expressed in stems and leaves, and, to a lower extent, in flowers, flower buds and seedlings. Strongly expressed in flower buds and leaves, to a lower extent in stems, and at low levels in seedlings and flowers.

It localises to the cell membrane. Its subcellular location is the peroxisome. It is found in the cytoplasm. The protein resides in the cytosol. The enzyme catalyses 5-hydroxyisourate + H2O = 5-hydroxy-2-oxo-4-ureido-2,5-dihydro-1H-imidazole-5-carboxylate + H(+). It catalyses the reaction 5-hydroxy-2-oxo-4-ureido-2,5-dihydro-1H-imidazole-5-carboxylate + H(+) = (S)-allantoin + CO2. It functions in the pathway purine metabolism; urate degradation; (S)-allantoin from urate: step 2/3. Its pathway is purine metabolism; urate degradation; (S)-allantoin from urate: step 3/3. Its function is as follows. Involved in the last two steps of the degradation of uric acid, i.e. the hydrolysis of 5-hydroxyisourate (HIU) to 2-oxo-4-hydroxy-4-carboxy-5-ureidoimidazoline (OHCU) and its stereoselective decarboxylation to (S)-allantoin, a major ureide compound. Might function as a negative regulator to modulate brassinosteroid-mediated plant growth. Together with B1L, prevents plant growth and development, but by opposition to B1L, negatively regulates cold tolerance, probably in a brassinosteroid (BR) and allantoin-dependent manner. In Arabidopsis thaliana (Mouse-ear cress), this protein is Uric acid degradation bifunctional protein TTL.